The sequence spans 442 residues: Cell division protein FtsA (442 aa).

The interval 401-428 (VTSYDNDSYDAPEETVYDEPEQKKSDED) is disordered. Positions 407 to 419 (DSYDAPEETVYDE) are enriched in acidic residues.

Belongs to the FtsA/MreB family. In terms of assembly, self-interacts. Interacts with FtsZ.

Its subcellular location is the cell membrane. Its function is as follows. Cell division protein that is involved in the assembly of the Z ring. May serve as a membrane anchor for the Z ring. The sequence is that of Cell division protein FtsA from Enterococcus hirae.